The chain runs to 746 residues: 1,4-alpha-glucan branching enzyme GlgB (746 aa).

The Nucleophile role is filled by Asp-418. The active-site Proton donor is the Glu-471.

Belongs to the glycosyl hydrolase 13 family. GlgB subfamily. In terms of assembly, monomer.

The enzyme catalyses Transfers a segment of a (1-&gt;4)-alpha-D-glucan chain to a primary hydroxy group in a similar glucan chain.. It participates in glycan biosynthesis; glycogen biosynthesis. Catalyzes the formation of the alpha-1,6-glucosidic linkages in glycogen by scission of a 1,4-alpha-linked oligosaccharide from growing alpha-1,4-glucan chains and the subsequent attachment of the oligosaccharide to the alpha-1,6 position. This is 1,4-alpha-glucan branching enzyme GlgB from Nitrosospira multiformis (strain ATCC 25196 / NCIMB 11849 / C 71).